Here is a 359-residue protein sequence, read N- to C-terminus: MAIVSSNAEPSKGAPRPKPSRVVDAARQLDDSAELSATKEDGLRPRRLDDYIGQRELKQVLGIAIQAAMGRGEALDHVLLYGPPGLGKTTMAMVLAEELGVTCRITSAPALERPRDIVGLLVNLQPKEVLFIDEIHRLTRVAEELLYPAMEDRRLDLTVGKGSTARTRALELPPFTLVGATTRAGALSSPLRDRFGLIQRLEFYGQEDLQAIVMRAAGLLTLQLSPEACAEIARRCRGTPRIANRLLRRVRDVACVREVSGCIDVKLVDEALTLHRVDGKGLDASDRRLLELLLQSHGGGPVGLDTLAAALGEDPTTLEAVVEPYLLQLGFLQRTPRGRVVTAAGRGHLGWPADEGDAA.

The segment at 1–22 is disordered; the sequence is MAIVSSNAEPSKGAPRPKPSRV. The large ATPase domain (RuvB-L) stretch occupies residues 13 to 204; the sequence is GAPRPKPSRV…FGLIQRLEFY (192 aa). Positions 43, 44, 85, 88, 89, 90, 194, 204, and 241 each coordinate ATP. Thr89 contributes to the Mg(2+) binding site. The segment at 205–276 is small ATPAse domain (RuvB-S); the sequence is GQEDLQAIVM…LVDEALTLHR (72 aa). The tract at residues 279–359 is head domain (RuvB-H); the sequence is GKGLDASDRR…GWPADEGDAA (81 aa). The DNA site is built by Arg334 and Arg339.

Belongs to the RuvB family. Homohexamer. Forms an RuvA(8)-RuvB(12)-Holliday junction (HJ) complex. HJ DNA is sandwiched between 2 RuvA tetramers; dsDNA enters through RuvA and exits via RuvB. An RuvB hexamer assembles on each DNA strand where it exits the tetramer. Each RuvB hexamer is contacted by two RuvA subunits (via domain III) on 2 adjacent RuvB subunits; this complex drives branch migration. In the full resolvosome a probable DNA-RuvA(4)-RuvB(12)-RuvC(2) complex forms which resolves the HJ.

The protein localises to the cytoplasm. It carries out the reaction ATP + H2O = ADP + phosphate + H(+). The RuvA-RuvB-RuvC complex processes Holliday junction (HJ) DNA during genetic recombination and DNA repair, while the RuvA-RuvB complex plays an important role in the rescue of blocked DNA replication forks via replication fork reversal (RFR). RuvA specifically binds to HJ cruciform DNA, conferring on it an open structure. The RuvB hexamer acts as an ATP-dependent pump, pulling dsDNA into and through the RuvAB complex. RuvB forms 2 homohexamers on either side of HJ DNA bound by 1 or 2 RuvA tetramers; 4 subunits per hexamer contact DNA at a time. Coordinated motions by a converter formed by DNA-disengaged RuvB subunits stimulates ATP hydrolysis and nucleotide exchange. Immobilization of the converter enables RuvB to convert the ATP-contained energy into a lever motion, pulling 2 nucleotides of DNA out of the RuvA tetramer per ATP hydrolyzed, thus driving DNA branch migration. The RuvB motors rotate together with the DNA substrate, which together with the progressing nucleotide cycle form the mechanistic basis for DNA recombination by continuous HJ branch migration. Branch migration allows RuvC to scan DNA until it finds its consensus sequence, where it cleaves and resolves cruciform DNA. This is Holliday junction branch migration complex subunit RuvB from Synechococcus sp. (strain CC9311).